We begin with the raw amino-acid sequence, 215 residues long: N-(5'-phosphoribosyl)anthranilate isomerase (215 aa).

The protein belongs to the TrpF family.

It carries out the reaction N-(5-phospho-beta-D-ribosyl)anthranilate = 1-(2-carboxyphenylamino)-1-deoxy-D-ribulose 5-phosphate. It functions in the pathway amino-acid biosynthesis; L-tryptophan biosynthesis; L-tryptophan from chorismate: step 3/5. This chain is N-(5'-phosphoribosyl)anthranilate isomerase (trpF), found in Aeropyrum pernix (strain ATCC 700893 / DSM 11879 / JCM 9820 / NBRC 100138 / K1).